The following is a 166-amino-acid chain: Putative universal stress protein SA1532 (166 aa).

Belongs to the universal stress protein A family.

The protein resides in the cytoplasm. The protein is Putative universal stress protein SA1532 of Staphylococcus aureus (strain N315).